A 688-amino-acid chain; its full sequence is Glycine--tRNA ligase beta subunit (688 aa).

It belongs to the class-II aminoacyl-tRNA synthetase family. In terms of assembly, tetramer of two alpha and two beta subunits.

Its subcellular location is the cytoplasm. It catalyses the reaction tRNA(Gly) + glycine + ATP = glycyl-tRNA(Gly) + AMP + diphosphate. The chain is Glycine--tRNA ligase beta subunit from Haemophilus influenzae (strain PittEE).